The sequence spans 520 residues: MTNVADLTSVEKIIVLDFGSQFNQLITRRIREFGVFSELLSHRTTAEEIRKIAPKGIIFSGGPNSVYDKDAFSIDPEIYELGIPILGICYGMQLMTHNLGGKVEPAANREYGKAELEILGDATLFQGTPAKQTVWMSHGDLVTEIAPGFEKVGTSNDCPIASIEDANRKFYGVQFHPEVRHSEYGNDLLRHFAFDVCGCTGDWSMENFIDMEVAKIREQVGDKKVLLGLSGGVDSSVVGVLLQKAIGDQLTCIFVDHGLLRKGEAEQVMESLGGKFGLNIIKVDAKERFLSKLAGVSDPEQKRKIIGNEFVYVFDDEATKLAGEEGVSFLAQGTLYTDVIESGTETAQTIKSHHNVGGLPEDMQFELIEPLNTLFKDEVRALGTELGMPDAIVWRQPFPGPGLGIRVLGEITEDKLQIVRDSDAILREEIAAAGLDRDIWQYFTVLPGIRSVGVMGDGRTYDYTVGIRAVTSIDGMTADFARIPWDVLQKISVRIVNEVAHVNRIVYDITSKPPATVEWE.

The Glutamine amidotransferase type-1 domain maps to 12–202 (KIIVLDFGSQ…AFDVCGCTGD (191 aa)). Cysteine 89 serves as the catalytic Nucleophile. Catalysis depends on residues histidine 176 and glutamate 178. In terms of domain architecture, GMPS ATP-PPase spans 203-395 (WSMENFIDME…LGMPDAIVWR (193 aa)). 230–236 (SGGVDSS) provides a ligand contact to ATP.

As to quaternary structure, homodimer.

The enzyme catalyses XMP + L-glutamine + ATP + H2O = GMP + L-glutamate + AMP + diphosphate + 2 H(+). Its pathway is purine metabolism; GMP biosynthesis; GMP from XMP (L-Gln route): step 1/1. Functionally, catalyzes the synthesis of GMP from XMP. This Enterococcus faecalis (strain ATCC 700802 / V583) protein is GMP synthase [glutamine-hydrolyzing].